Consider the following 394-residue polypeptide: MLLEAPVYKEIFGAVTIHEVQKVIKMDTETEEVPIYTISNIPREKIYDLLGKMAVIVPMKNEKLHLVDGVLKAIPHKCPIIIVSNSKREGPNRYKLEVDLIRHFYNLTHSKIIMIHQKDPGLAKAFKEVGYTDILDENGMIRSGKGEGMLVGLLLAKAIGAEYVGFVDADNYIPGAVNEYVKDYAAGFLMSESEYTMVRLHWRHKPKVTKGTLYFKKWGRVSEITNHYLNLLVSEHTAFETTIMVTGNAGEHAMTMKLAEILPFSTGYSIEPYEIVYILERFGKWENVEEFKDVFDQGIEIFQIETLNPHFHEDKGKEHVKEMLLLSLATIYHSKLATDNLRKRILKDLRDHGILGENEEPPKPLVMRPIKEIPIKEWMDIVEGNSETLLRFEL.

The protein belongs to the glycosyltransferase 2 family. Mg(2+) serves as cofactor.

Its subcellular location is the cytoplasm. The catalysed reaction is (2R)-3-phosphoglycerate + GDP-alpha-D-mannose = 2-O-(alpha-D-mannosyl)-3-phosphoglycerate + GDP + H(+). Its pathway is carbohydrate biosynthesis; 2-(alpha-D-mannosyl)-D-glycerate biosynthesis; 2-(alpha-D-mannosyl)-D-glycerate from GDP-alpha-D-mannose (MPG route): step 1/2. Functionally, transfers a mannosyl group from GDP-mannose to phosphoglycerate to form mannosyl-3-phosphoglycerate (MPG). The enzyme is absolutely specific for GDP-mannose and 3-phosphoglycerate, and transfers the mannosyl group with retention of configuration. This is Mannosyl-3-phosphoglycerate synthase (mngA) from Pyrococcus horikoshii (strain ATCC 700860 / DSM 12428 / JCM 9974 / NBRC 100139 / OT-3).